The following is a 262-amino-acid chain: Ribosomal RNA small subunit methyltransferase A (262 aa).

Residues Asn13, Leu15, Gly40, Glu61, Asp85, and Asn105 each coordinate S-adenosyl-L-methionine.

It belongs to the class I-like SAM-binding methyltransferase superfamily. rRNA adenine N(6)-methyltransferase family. RsmA subfamily.

The protein resides in the cytoplasm. It catalyses the reaction adenosine(1518)/adenosine(1519) in 16S rRNA + 4 S-adenosyl-L-methionine = N(6)-dimethyladenosine(1518)/N(6)-dimethyladenosine(1519) in 16S rRNA + 4 S-adenosyl-L-homocysteine + 4 H(+). Its function is as follows. Specifically dimethylates two adjacent adenosines (A1518 and A1519) in the loop of a conserved hairpin near the 3'-end of 16S rRNA in the 30S particle. May play a critical role in biogenesis of 30S subunits. The chain is Ribosomal RNA small subunit methyltransferase A from Laribacter hongkongensis (strain HLHK9).